We begin with the raw amino-acid sequence, 403 residues long: Farnesyl pyrophosphate synthase (403 aa).

Residues aspartate 156 and aspartate 160 each contribute to the Mg(2+) site. The DDXXD motif motif lies at 156–160; that stretch reads DDLAD.

Belongs to the FPP/GGPP synthase family. Requires Mg(2+) as cofactor.

The enzyme catalyses isopentenyl diphosphate + (2E)-geranyl diphosphate = (2Z,6E)-farnesyl diphosphate + diphosphate. It participates in pheromone biosynthesis. Functionally, farnesyl pyrophosphate synthase involved in pheromone biosynthesis by catalyzing the formation of (2Z,6E)-farnesyl diphosphate. This chain is Farnesyl pyrophosphate synthase, found in Nezara viridula (Southern green stink bug).